The chain runs to 736 residues: Segment polarity protein dishevelled homolog DVL-2 (736 aa).

The DIX domain occupies 11–93; it reads VGETKVIYHL…RVVSWLVSSD (83 aa). The disordered stretch occupies residues 93-255; that stretch reads DTPQPEVAPP…RMERTSSFSS (163 aa). The segment covering 111–122 has biased composition (pro residues); sequence VPPPPPLPPLPP. Residues 159-171 show a composition bias toward basic and acidic residues; sequence LRRDRPRRRDSSE. The span at 193–208 shows a compositional bias: low complexity; sequence ESSSTLMTSELESTSL. The residue at position 211 (S211) is a Phosphoserine. Polar residues predominate over residues 218–230; the sequence is SRFSSSTEQSSAS. Basic residues predominate over residues 232 to 244; the sequence is LLKRHRRRRKQRP. The PDZ domain occupies 267 to 339; sequence TVTLNMEKYN…NDDAVRVLRD (73 aa). Positions 433 to 507 constitute a DEP domain; the sequence is PESGLEVRDR…SEQCYYVFGD (75 aa). Over residues 558-568 the composition is skewed to pro residues; sequence PHPYSPQPPPY. Positions 558–665 are disordered; that stretch reads PHPYSPQPPP…PNLRALPGLH (108 aa). 2 stretches are compositionally biased toward low complexity: residues 581–598 and 614–629; these read ASSQ…TRSD and SKSG…SRGG.

The protein belongs to the DSH family. In terms of assembly, interacts through its PDZ domain with the C-terminal regions of VANGL1 and VANGL2. Interacts with Rac. Interacts with ARRB1; the interaction is enhanced by phosphorylation of DVL1. Can form large oligomers (via DIX domain). Interacts (via DIX domain) with DIXDC1 (via DIX domain). Interacts (via DEP domain) with AP2M1 and the AP-2 complex. Interacts with FAM105B/otulin. Interacts with DCDC2. Interacts (when phosphorylated) with FOXK1 and FOXK2; the interaction induces DVL2 nuclear translocation. Interacts with MAPK15. Interacts with PKD1 (via extracellular domain). Interacts with LMBR1L. In terms of processing, phosphorylated by CSNK1D. WNT3A induces DVL2 phosphorylation by CSNK1E and MARK kinases. Post-translationally, ubiquitinated via 'Lys-63'-linked polyubiquitin chains; leading to its autophagy-mediated degradation. In terms of tissue distribution, ubiquitous.

It is found in the cell membrane. The protein localises to the cytoplasm. The protein resides in the cytosol. It localises to the cytoplasmic vesicle. Its subcellular location is the nucleus. Its function is as follows. Plays a role in the signal transduction pathways mediated by multiple Wnt genes. Participates both in canonical and non-canonical Wnt signaling by binding to the cytoplasmic C-terminus of frizzled family members and transducing the Wnt signal to down-stream effectors. Promotes internalization and degradation of frizzled proteins upon Wnt signaling. The sequence is that of Segment polarity protein dishevelled homolog DVL-2 (Dvl2) from Mus musculus (Mouse).